The following is a 448-amino-acid chain: Putative F-box/LRR-repeat protein At5g25860 (448 aa).

One can recognise an F-box domain in the interval 11-58 (RDAVNCLPDEILAKILSYLPTKRAVSTSLISKRWRNLFALMIQLFESQ). 5 LRR repeats span residues 82 to 106 (QESF…SILC), 185 to 214 (FLHA…FLHD), 215 to 240 (LRGY…TVHF), 310 to 341 (TLSL…YFES), and 342 to 367 (NEKE…VLKG).

The chain is Putative F-box/LRR-repeat protein At5g25860 from Arabidopsis thaliana (Mouse-ear cress).